A 66-amino-acid chain; its full sequence is Large ribosomal subunit protein bL33c (66 aa).

Belongs to the bacterial ribosomal protein bL33 family.

Its subcellular location is the plastid. The protein localises to the chloroplast. In Aethionema grandiflorum (Persian stone-cress), this protein is Large ribosomal subunit protein bL33c.